A 265-amino-acid polypeptide reads, in one-letter code: Tryptophan synthase alpha chain (265 aa).

Catalysis depends on proton acceptor residues Glu47 and Asp58.

This sequence belongs to the TrpA family. In terms of assembly, tetramer of two alpha and two beta chains.

It catalyses the reaction (1S,2R)-1-C-(indol-3-yl)glycerol 3-phosphate + L-serine = D-glyceraldehyde 3-phosphate + L-tryptophan + H2O. It functions in the pathway amino-acid biosynthesis; L-tryptophan biosynthesis; L-tryptophan from chorismate: step 5/5. Functionally, the alpha subunit is responsible for the aldol cleavage of indoleglycerol phosphate to indole and glyceraldehyde 3-phosphate. The sequence is that of Tryptophan synthase alpha chain from Methanoregula boonei (strain DSM 21154 / JCM 14090 / 6A8).